A 99-amino-acid chain; its full sequence is Acylphosphatase (99 aa).

In terms of domain architecture, Acylphosphatase-like spans 14–99 (AVDVTVTGRV…DQGLRSFGVR (86 aa)). Active-site residues include Arg-29 and Asn-47.

Belongs to the acylphosphatase family.

It carries out the reaction an acyl phosphate + H2O = a carboxylate + phosphate + H(+). The protein is Acylphosphatase (acyP) of Nocardioides sp. (strain ATCC BAA-499 / JS614).